The chain runs to 273 residues: Large ribosomal subunit protein uL2 (273 aa).

Residues 228 to 273 (VDHPHGGGEGKTSGGRHPVTPWGFPTKGKKTRKNKRTSKFIVKKRK) form a disordered region. A compositionally biased stretch (basic residues) spans 254-273 (KGKKTRKNKRTSKFIVKKRK).

This sequence belongs to the universal ribosomal protein uL2 family. As to quaternary structure, part of the 50S ribosomal subunit. Forms a bridge to the 30S subunit in the 70S ribosome.

Its function is as follows. One of the primary rRNA binding proteins. Required for association of the 30S and 50S subunits to form the 70S ribosome, for tRNA binding and peptide bond formation. It has been suggested to have peptidyltransferase activity; this is somewhat controversial. Makes several contacts with the 16S rRNA in the 70S ribosome. This Rickettsia africae (strain ESF-5) protein is Large ribosomal subunit protein uL2.